The primary structure comprises 230 residues: Small ribosomal subunit protein uS3 (230 aa).

The KH type-2 domain maps to 39–107 (VRKFLEKKLE…PAQINIAEIR (69 aa)).

The protein belongs to the universal ribosomal protein uS3 family. As to quaternary structure, part of the 30S ribosomal subunit. Forms a tight complex with proteins S10 and S14.

In terms of biological role, binds the lower part of the 30S subunit head. Binds mRNA in the 70S ribosome, positioning it for translation. This is Small ribosomal subunit protein uS3 from Shewanella amazonensis (strain ATCC BAA-1098 / SB2B).